Reading from the N-terminus, the 334-residue chain is Serine/Arginine-related protein 53 (334 aa).

The span at 1-13 (MGRRSSDTEEESR) shows a compositional bias: basic and acidic residues. 3 disordered regions span residues 1–179 (MGRR…HLPP), 198–220 (DEAL…EDQA), and 246–290 (RSSK…SIPT). A compositionally biased stretch (basic residues) spans 14-24 (SKRKKKHRRRS). Over residues 44–62 (PRSDSRSWSRDRQLRSHSY) the composition is skewed to basic and acidic residues. Over residues 78-118 (SRRKRSRSRSRGRGKPYRVQRSRSKSRTRRSRSRPRPRSHS) the composition is skewed to basic residues. Composition is skewed to basic and acidic residues over residues 132–166 (RSRD…KRGD), 198–218 (DEAL…KEED), and 247–256 (SSKDVKKAVE). The stretch at 180 to 236 (AEQAKARLQLVLEAAAKADEALKAKERSEEEAKRRKEEDQATLVEQVKRVKEIEAIE) forms a coiled coil. Residues 265-278 (AASGPASAAAEPPS) show a composition bias toward low complexity.

As to quaternary structure, interacts (via Arg/Ser-rich domain) with LUC7L3, RBM39 and RSF1. Phosphorylated.

It localises to the nucleus. Its subcellular location is the nucleus speckle. It is found in the cytoplasm. Its function is as follows. Plays a role in pre-mRNA splicing. Involved in both constitutive and alternative pre-mRNA splicing. May have a role in the recognition of the 3' splice site during the second step of splicing. In Mus musculus (Mouse), this protein is Serine/Arginine-related protein 53 (Rsrc1).